A 457-amino-acid polypeptide reads, in one-letter code: Peptidyl-prolyl cis-trans isomerase FKBP5 (457 aa).

M1 carries the N-acetylmethionine modification. Residues 1–26 are disordered; the sequence is MTTDEGAKNSGESPTATVAEQGEDIT. S13 bears the Phosphoserine mark. K28 is modified (N6-acetyllysine). A PPIase FKBP-type 1 domain is found at 50-138; sequence GDKVYVHYKG…FFEIELLDFK (89 aa). N6-acetyllysine is present on K155. One can recognise a PPIase FKBP-type 2 domain in the interval 165-251; it reads GATVEIHLEG…IYEVTLKSFE (87 aa). TPR repeat units follow at residues 268 to 301, 317 to 350, and 351 to 384; these read AAIV…LEME, LAAF…DSAN, and EKGL…NPQN. Positions 421–457 are disordered; the sequence is AKEEANKAMGKKTSEGVTNEKGTDSSAVEEEKAEGHV. S445 carries the post-translational modification Phosphoserine.

In terms of assembly, part of a heteromultimeric cytoplasmic complex with HSP90AA1, HSPA1A/HSPA1B and steroid receptors. Upon ligand binding dissociates from the complex and FKBP4 takes its place. Interacts with functionally mature heterooligomeric progesterone receptor complexes along with HSP90 and TEBP. Interacts with NR3C1. Interacts with Akt/AKT1 and PHLPP1; enhancing dephosphorylation and subsequent activation of Akt/AKT1. Interacts with IFI44L; this interaction modulates the kinase activity of IKBKB and IKBKE. Interacts with IKBKB and IKBKE. Post-translationally, acetylation impairs ability to promote interaction between Akt/AKT1 and PHLPP1. Deacetylation by SIRT7 promotes interaction between Akt/AKT1 and PHLPP1, leading to suppress Akt/AKT1 activation. In terms of processing, ubiquitinated, leading to degradation in a proteasome-dependent manner. Deubiquitinated by USP49, leading to stabilization.

The protein resides in the cytoplasm. It is found in the nucleus. The catalysed reaction is [protein]-peptidylproline (omega=180) = [protein]-peptidylproline (omega=0). Its activity is regulated as follows. Inhibited by both FK506 and rapamycin. In terms of biological role, immunophilin protein with PPIase and co-chaperone activities. Component of unligated steroid receptors heterocomplexes through interaction with heat-shock protein 90 (HSP90). Plays a role in the intracellular trafficking of heterooligomeric forms of steroid hormone receptors maintaining the complex into the cytoplasm when unliganded. Acts as a regulator of Akt/AKT1 activity by promoting the interaction between Akt/AKT1 and PHLPP1, thereby enhancing dephosphorylation and subsequent activation of Akt/AKT1. Interacts with IKBKE and IKBKB which facilitates IKK complex assembly leading to increased IKBKE and IKBKB kinase activity, NF-kappaB activation, and IFN production. The protein is Peptidyl-prolyl cis-trans isomerase FKBP5 (FKBP5) of Chlorocebus aethiops (Green monkey).